Reading from the N-terminus, the 70-residue chain is Large ribosomal subunit protein bL31 (70 aa).

Positions 16, 18, 37, and 40 each coordinate Zn(2+).

It belongs to the bacterial ribosomal protein bL31 family. Type A subfamily. In terms of assembly, part of the 50S ribosomal subunit. Requires Zn(2+) as cofactor.

Its function is as follows. Binds the 23S rRNA. The chain is Large ribosomal subunit protein bL31 from Shewanella sp. (strain MR-4).